We begin with the raw amino-acid sequence, 1308 residues long: D-lysergyl-peptide-synthetase subunit 2 (1308 aa).

Residues 261-658 (EWCRRTPSAV…CRKSTQVKLR (398 aa)) form an adenylation (A) domain region. The 69-residue stretch at 803–871 (IEEAFQRFFA…ELSELARHTK (69 aa)) folds into the Carrier domain. Position 835 is an O-(pantetheine 4'-phosphoryl)serine (Ser835). The segment at 910–1299 (EDVYPCTPLQ…HAAPRTLIGD (390 aa)) is condensation (C) domain.

This sequence belongs to the NRP synthetase family.

Its pathway is alkaloid biosynthesis; ergot alkaloid biosynthesis. Functionally, D-lysergyl-peptide-synthetase subunit 2; part of the gene cluster that mediates the biosynthesis of fungal ergot alkaloid. DmaW catalyzes the first step of ergot alkaloid biosynthesis by condensing dimethylallyl diphosphate (DMAP) and tryptophan to form 4-dimethylallyl-L-tryptophan. The second step is catalyzed by the methyltransferase easF that methylates 4-dimethylallyl-L-tryptophan in the presence of S-adenosyl-L-methionine, resulting in the formation of 4-dimethylallyl-L-abrine. The catalase easC and the FAD-dependent oxidoreductase easE then transform 4-dimethylallyl-L-abrine to chanoclavine-I which is further oxidized by EasD in the presence of NAD(+), resulting in the formation of chanoclavine-I aldehyde. Agroclavine dehydrogenase easG then mediates the conversion of chanoclavine-I aldehyde to agroclavine via a non-enzymatic adduct reaction: the substrate is an iminium intermediate that is formed spontaneously from chanoclavine-I aldehyde in the presence of glutathione. The presence of easA is not required to complete this reaction. Further conversion of agroclavine to paspalic acid is a two-step process involving oxidation of agroclavine to elymoclavine and of elymoclavine to paspalic acid, the second step being performed by the elymoclavine oxidase cloA. Paspalic acid is then further converted to D-lysergic acid. Ergopeptines are assembled from D-lysergic acid and three different amino acids by the D-lysergyl-peptide-synthetases composed each of a monomudular and a trimodular nonribosomal peptide synthetase subunit. LpsB and lpsC encode the monomodular subunits responsible for D-lysergic acid activation and incorporation into the ergopeptine backbone. LpsA1 and A2 subunits encode the trimodular nonribosomal peptide synthetase assembling the tripeptide portion of ergopeptines. LpsA1 is responsible for formation of the major ergopeptine, ergotamine, and lpsA2 for alpha-ergocryptine, the minor ergopeptine of the total alkaloid mixture elaborated by C.purpurea. D-lysergyl-tripeptides are assembled by the nonribosomal peptide synthetases and released as N-(D-lysergyl-aminoacyl)-lactams. Cyclolization of the D-lysergyl-tripeptides is performed by the Fe(2+)/2-ketoglutarate-dependent dioxygenase easH which introduces a hydroxyl group into N-(D-lysergyl-aminoacyl)-lactam at alpha-C of the aminoacyl residue followed by spontaneous condensation with the terminal lactam carbonyl group. This Claviceps purpurea (Ergot fungus) protein is D-lysergyl-peptide-synthetase subunit 2.